Consider the following 96-residue polypeptide: Co-chaperonin GroES (96 aa).

Belongs to the GroES chaperonin family. In terms of assembly, heptamer of 7 subunits arranged in a ring. Interacts with the chaperonin GroEL.

Its subcellular location is the cytoplasm. In terms of biological role, together with the chaperonin GroEL, plays an essential role in assisting protein folding. The GroEL-GroES system forms a nano-cage that allows encapsulation of the non-native substrate proteins and provides a physical environment optimized to promote and accelerate protein folding. GroES binds to the apical surface of the GroEL ring, thereby capping the opening of the GroEL channel. The polypeptide is Co-chaperonin GroES (Dechloromonas aromatica (strain RCB)).